The primary structure comprises 648 residues: MSAADPIQDNKSWTVADSAALYGLDHWGHPYFSANANGHVQVQPRGDQGSCLDLVELVEELKSRNLNLPLLIRFDDILEDRLERLHSAFEEAISKYGYAGRYQGVFPVKCNQQRHVVEQLVESGRQWHFGLEAGSKAELLIALSLVNDPEALLICNGYKDQRYIETAILARRLGRQPVVVIEQPDEVERIIRSSQELGAAPFLGVRAKLTTRSTGHWSSSVGEKAKFGLSVPDLLATVEALRQADLLSDLRLLHFHIGSQINDIAVLKDALQEAAQIYVELTKLGAPMGYLDVGGGLGVDYDGSRSASAASTNYSLQNYANDVVATVRECCKPHGITLPILVSESGRAIASHFSILVFDVLGTGTVPGAIPKQTVEEPLTIHNLRETLSGVMATQKGAVSEISRLQEAWNDAIKFKEDALAAFRLGYISLPERALAEQLTGACAEAIMGQLPCNETIPDDLQSLRAVLASTYYANLSIFRSAPDTWAIEQLFPLMPIHRLNEEPTQLGHFADLTCDSDGKLDRFIGNGQTKTLLELHNLRQNEAYMIGMFLAGAYQEVMGNLHNLFGSTNAVHIRLTTAGGYQVDHVVRGNTNSEVLEAMEHNPELLLERLRLASELAIQRGELKINDVRRLMDHLEASLRQTTYLQG.

An N6-(pyridoxal phosphate)lysine modification is found at lysine 109. 291-301 (LDVGGGLGVDY) is a binding site for substrate.

This sequence belongs to the Orn/Lys/Arg decarboxylase class-II family. SpeA subfamily. The cofactor is Mg(2+). It depends on pyridoxal 5'-phosphate as a cofactor.

The catalysed reaction is L-arginine + H(+) = agmatine + CO2. Its function is as follows. Catalyzes the biosynthesis of agmatine from arginine. In Prochlorococcus marinus (strain MIT 9313), this protein is Biosynthetic arginine decarboxylase.